Consider the following 474-residue polypeptide: Proline--tRNA ligase (474 aa).

This sequence belongs to the class-II aminoacyl-tRNA synthetase family. ProS type 3 subfamily. As to quaternary structure, homodimer.

Its subcellular location is the cytoplasm. It carries out the reaction tRNA(Pro) + L-proline + ATP = L-prolyl-tRNA(Pro) + AMP + diphosphate. Its function is as follows. Catalyzes the attachment of proline to tRNA(Pro) in a two-step reaction: proline is first activated by ATP to form Pro-AMP and then transferred to the acceptor end of tRNA(Pro). This chain is Proline--tRNA ligase, found in Aster yellows witches'-broom phytoplasma (strain AYWB).